The sequence spans 318 residues: Gamma-glutamyl hydrolase (318 aa).

Positions 1-24 (MARLGRLLSVLGLVLCGATGLGLS) are cleaved as a signal peptide. The Gamma-glutamyl hydrolase domain occupies 25-318 (APPAPTPKKP…SSFQQSYIFD (294 aa)). Asn-116 carries N-linked (GlcNAc...) asparagine glycosylation. Catalysis depends on Cys-134, which acts as the Nucleophile. N-linked (GlcNAc...) asparagine glycosylation is found at Asn-163 and Asn-203. The active-site Proton donor is His-244. Asn-307 is a glycosylation site (N-linked (GlcNAc...) asparagine).

This sequence belongs to the peptidase C26 family. In terms of assembly, homodimer.

The protein resides in the secreted. The protein localises to the extracellular space. It is found in the lysosome. It localises to the melanosome. It carries out the reaction (6S)-5,6,7,8-tetrahydrofolyl-(gamma-L-Glu)(n) + (n-1) H2O = (6S)-5,6,7,8-tetrahydrofolate + (n-1) L-glutamate. Functionally, hydrolyzes the polyglutamate sidechains of pteroylpolyglutamates. Progressively removes gamma-glutamyl residues from pteroylpoly-gamma-glutamate to yield pteroyl-alpha-glutamate (folic acid) and free glutamate. May play an important role in the bioavailability of dietary pteroylpolyglutamates and in the metabolism of pteroylpolyglutamates and antifolates. Exhibits either endo- or exopeptidase activity depending upon the tissue of origin. When secreted, it acts primarily as an endopeptidase. The chain is Gamma-glutamyl hydrolase (GGH) from Bos taurus (Bovine).